Here is a 156-residue protein sequence, read N- to C-terminus: Large ribosomal subunit protein uL15 (156 aa).

Residues 1-11 (MKLNDLRDKPG) are compositionally biased toward basic and acidic residues. Positions 1–44 (MKLNDLRDKPGSVKARKRVGRGIGSGTGKTGGRGVKGQKSRSGV) are disordered. Gly residues predominate over residues 21 to 35 (RGIGSGTGKTGGRGV).

Belongs to the universal ribosomal protein uL15 family. Part of the 50S ribosomal subunit.

Binds to the 23S rRNA. The sequence is that of Large ribosomal subunit protein uL15 from Brucella abortus (strain S19).